A 340-amino-acid polypeptide reads, in one-letter code: MSRKFMQVYEYDREQYLDEFIEDRYNDSFITSPEYYSAEKYMCRYTTLNHNCINVRRCALDSKLLHDIITNCKIYNNIELVRATKFVYYLDLIKCNWVSKVGDSVLYPVIFITHTSTRNLDKVSVKTYKGVKVKKLNRCADHAIVINPFVKFKLTLPNKTSHAKVLVTFCKLKTDITPVEAPLPGNVLVYTFPDINKRIPGYIHLNIEGCIDGMIYINSSKFACVLKLHRSMYRIPPFPIDICSCCSQYINYDIEIPIHDLIKDVAIFKNKETVYYLKLNNKTIARFTYFNNIDTAITQEHEYVKIALGIVCKLMINNMHSIVGVNHSNTFVNCLLEDNV.

It belongs to the orthopoxvirus B17 protein family.

The chain is Protein B17 from Vaccinia virus (strain Western Reserve) (VACV).